A 154-amino-acid polypeptide reads, in one-letter code: Myoglobin (154 aa).

The region spanning 2 to 148 (VLSDAEWQLV…FRKDIAAKYK (147 aa)) is the Globin domain. At Ser4 the chain carries Phosphoserine. His65 is a nitrite binding site. His65 is a binding site for O2. Position 68 is a phosphothreonine (Thr68). His94 is a binding site for heme b.

It belongs to the globin family. Monomeric.

The protein resides in the cytoplasm. It localises to the sarcoplasm. It carries out the reaction Fe(III)-heme b-[protein] + nitric oxide + H2O = Fe(II)-heme b-[protein] + nitrite + 2 H(+). The enzyme catalyses H2O2 + AH2 = A + 2 H2O. Functionally, monomeric heme protein which primary function is to store oxygen and facilitate its diffusion within muscle tissues. Reversibly binds oxygen through a pentacoordinated heme iron and enables its timely and efficient release as needed during periods of heightened demand. Depending on the oxidative conditions of tissues and cells, and in addition to its ability to bind oxygen, it also has a nitrite reductase activity whereby it regulates the production of bioactive nitric oxide. Under stress conditions, like hypoxia and anoxia, it also protects cells against reactive oxygen species thanks to its pseudoperoxidase activity. This is Myoglobin (MB) from Megaptera novaeangliae (Humpback whale).